We begin with the raw amino-acid sequence, 509 residues long: Probable cytochrome P450 4ac3 (509 aa).

Cysteine 454 lines the heme pocket.

It belongs to the cytochrome P450 family. Requires heme as cofactor.

The protein localises to the endoplasmic reticulum membrane. Its subcellular location is the microsome membrane. May be involved in the metabolism of insect hormones and in the breakdown of synthetic insecticides. In Drosophila melanogaster (Fruit fly), this protein is Probable cytochrome P450 4ac3 (Cyp4ac3).